Reading from the N-terminus, the 670-residue chain is Leiomodin-3 (670 aa).

Disordered stretches follow at residues 34-72 (EMDDIAPDERVPVGLRQKDASHEMTVRDCTEPESEEEID), 94-120 (EIAPDERVPVGMRQRDQTDKPPTGSFD), 139-165 (EEERVPTTLLPSQKTNEEHEAKNEDKV), and 202-274 (EDKV…NWVP). Composition is skewed to basic and acidic residues over residues 40–63 (PDERVPVGLRQKDASHEMTVRDCT), 97–112 (PDERVPVGMRQRDQTD), 153–163 (TNEEHEAKNED), 205–214 (VCDKPVKTDL), and 249–261 (TETKVNEEKKEDS). Residues 150–183 (SQKTNEEHEAKNEDKVEELELVYEEIVEEVEGGQ) are a coiled coil. Positions 464-494 (DRQRQQRMEEQKLQQMKEQRKVMEMYEDSLN) form a coiled coil. Residues 517–556 (NGAEDIPEDSPEPSPQPSPPHQLCKTQHLAPQQHPPNLST) are disordered. The 20-residue stretch at 637 to 656 (PRDHLLSEIRQSNVAYLKAV) folds into the WH2 domain.

Belongs to the tropomodulin family. As to expression, expressed in muscle (at protein level).

Its subcellular location is the cytoplasm. It localises to the myofibril. The protein resides in the sarcomere. It is found in the a band. The protein localises to the m line. Its subcellular location is the cytoskeleton. Functionally, essential for the organization of sarcomeric thin filaments in skeletal muscle. In Danio rerio (Zebrafish), this protein is Leiomodin-3.